We begin with the raw amino-acid sequence, 516 residues long: D-alanine--D-alanyl carrier protein ligase (516 aa).

156–157 contacts ATP; that stretch reads TS. Asp203 contributes to the D-alanine binding site. Position 298 to 303 (298 to 303) interacts with ATP; that stretch reads NAYGPT. Val307 is a binding site for D-alanine. ATP contacts are provided by residues Asp389, 401–404, and Lys503; that span reads YGGR. Lys503 is a binding site for D-alanine.

Belongs to the ATP-dependent AMP-binding enzyme family. DltA subfamily.

The protein resides in the cytoplasm. The enzyme catalyses holo-[D-alanyl-carrier protein] + D-alanine + ATP = D-alanyl-[D-alanyl-carrier protein] + AMP + diphosphate. It functions in the pathway cell wall biogenesis; lipoteichoic acid biosynthesis. Its function is as follows. Catalyzes the first step in the D-alanylation of lipoteichoic acid (LTA), the activation of D-alanine and its transfer onto the D-alanyl carrier protein (Dcp) DltC. In an ATP-dependent two-step reaction, forms a high energy D-alanyl-AMP intermediate, followed by transfer of the D-alanyl residue as a thiol ester to the phosphopantheinyl prosthetic group of the Dcp. D-alanylation of LTA plays an important role in modulating the properties of the cell wall in Gram-positive bacteria, influencing the net charge of the cell wall. This chain is D-alanine--D-alanyl carrier protein ligase, found in Streptococcus pneumoniae (strain ATCC 700669 / Spain 23F-1).